A 337-amino-acid polypeptide reads, in one-letter code: Putative long-chain-alcohol O-fatty-acyltransferase 10 (337 aa).

8 helical membrane passes run S7–S27, S38–F58, S59–F79, G82–I102, I142–I162, M228–I248, T254–V274, and M285–G305.

It belongs to the wax synthase family.

It is found in the membrane. It catalyses the reaction a long chain fatty alcohol + a fatty acyl-CoA = a wax ester + CoA. In terms of biological role, catalyzes the final step in the synthesis of long-chain linear esters (waxes). The sequence is that of Putative long-chain-alcohol O-fatty-acyltransferase 10 from Arabidopsis thaliana (Mouse-ear cress).